Here is a 1423-residue protein sequence, read N- to C-terminus: DNA-directed RNA polymerase subunit beta' (1423 aa).

Zn(2+) contacts are provided by C71, C73, C86, and C89. Positions 461, 463, and 465 each coordinate Mg(2+). Zn(2+) is bound by residues C815, C889, C896, and C899.

The protein belongs to the RNA polymerase beta' chain family. In terms of assembly, the RNAP catalytic core consists of 2 alpha, 1 beta, 1 beta' and 1 omega subunit. When a sigma factor is associated with the core the holoenzyme is formed, which can initiate transcription. It depends on Mg(2+) as a cofactor. Zn(2+) is required as a cofactor.

It carries out the reaction RNA(n) + a ribonucleoside 5'-triphosphate = RNA(n+1) + diphosphate. Functionally, DNA-dependent RNA polymerase catalyzes the transcription of DNA into RNA using the four ribonucleoside triphosphates as substrates. This Actinobacillus pleuropneumoniae serotype 7 (strain AP76) protein is DNA-directed RNA polymerase subunit beta'.